A 790-amino-acid polypeptide reads, in one-letter code: Phenylalanine--tRNA ligase beta subunit (790 aa).

Residues 40–149 enclose the tRNA-binding domain; sequence AEKVSGVVVG…IDAPVGTDIN (110 aa). Residues 402–479 form the B5 domain; the sequence is NKQIKINLSI…RIYGYSKLPE (78 aa). Positions 457, 463, 466, and 467 each coordinate Mg(2+). An FDX-ACB domain is found at 698 to 789; it reads SKYPSVSRDI…LKTKFNIEQR (92 aa).

It belongs to the phenylalanyl-tRNA synthetase beta subunit family. Type 1 subfamily. Tetramer of two alpha and two beta subunits. Mg(2+) serves as cofactor.

It is found in the cytoplasm. The catalysed reaction is tRNA(Phe) + L-phenylalanine + ATP = L-phenylalanyl-tRNA(Phe) + AMP + diphosphate + H(+). The sequence is that of Phenylalanine--tRNA ligase beta subunit from Francisella tularensis subsp. tularensis (strain SCHU S4 / Schu 4).